A 387-amino-acid polypeptide reads, in one-letter code: Beta-carotene 4-ketolase (387 aa).

Residues 1–78 (MPHSIDMEDS…GNPTVDDASQ (78 aa)) form a disordered region. Polar residues-rich tracts occupy residues 43–53 (NWQTQYHSSEG) and 65–78 (DATT…DASQ).

The enzyme catalyses echinenone + 2 AH2 + 2 O2 = canthaxanthin + 2 A + 3 H2O. The catalysed reaction is all-trans-beta-carotene + 2 AH2 + 2 O2 = echinenone + 2 A + 3 H2O. The protein operates within carotenoid biosynthesis. Functionally, involved in the biosynthesis of ketocarotenoids which are powerful anti-oxidative molecules. Catalyzes the conversion of beta-carotene to canthaxanthin via echinenone. This is Beta-carotene 4-ketolase from Protosiphon botryoides (Green alga).